Consider the following 127-residue polypeptide: Insulin-like growth factor 3.L (127 aa).

A signal peptide spans 1-49; the sequence is MPVTAMCLQDSKKLKKAKLTRKKVTPFPFSRMVLCLSLVFTLYVEATNA. Residues 49–80 are b; the sequence is ARCLRPRSKELLCGSELVDILQFICGPTGFYV. Cystine bridges form between Cys-61–Cys-99, Cys-73–Cys-112, and Cys-98–Cys-103. Residues 81-92 form a c region; the sequence is SKGASFRNRNRP. The interval 93 to 113 is a; sequence GIVEECCFCGCSVAILESYCA. The interval 114-121 is d; the sequence is APVTNFTG. A propeptide spans 122–127 (e peptide); the sequence is REEQKS.

This sequence belongs to the insulin family.

Its subcellular location is the secreted. Its function is as follows. The insulin-like growth factors, isolated from plasma, are structurally and functionally related to insulin but have a much higher growth-promoting activity. Promotes anterior neural development. The sequence is that of Insulin-like growth factor 3.L from Xenopus laevis (African clawed frog).